A 152-amino-acid polypeptide reads, in one-letter code: MEAVLNELVSVEDLKNFERKFQSEQAAGSVSKSTQFEYAWCLVRSKYNDDIRRGIVLLEELLPKGSKEEQRDYVFYLAVGNYRLKEYEKALKYVRGLLQTEPQNNQAKELERLIDKAMKKDGLVGMAIVGGMALGVAGLAGLIGLAVSKSKS.

M1 carries the N-acetylmethionine modification. At 1–122 (MEAVLNELVS…LIDKAMKKDG (122 aa)) the chain is on the cytoplasmic side. S10 bears the Phosphoserine mark. One copy of the TPR repeat lies at 71–104 (RDYVFYLAVGNYRLKEYEKALKYVRGLLQTEPQN). The chain crosses the membrane as a helical span at residues 123–143 (LVGMAIVGGMALGVAGLAGLI). The Mitochondrial intermembrane portion of the chain corresponds to 144–152 (GLAVSKSKS).

This sequence belongs to the FIS1 family. As to quaternary structure, interacts with DNM1L/DLP1 through the TPR region; may form part of a larger protein complex at the endoplasmic reticulum-mitochondrial interface during mitochondrial fission. Interacts with MARCHF5. Interacts with MIEF1. Interacts with PEX11A, PEX11B and PEX11G. In terms of processing, ubiquitinated by MARCHF5.

It is found in the mitochondrion outer membrane. The protein localises to the peroxisome membrane. Functionally, involved in the fragmentation of the mitochondrial network and its perinuclear clustering. Plays a minor role in the recruitment and association of the fission mediator dynamin-related protein 1 (DNM1L) to the mitochondrial surface and mitochondrial fission. May not be essential for the assembly of functional fission complexes and the subsequent membrane scission event. Also mediates peroxisomal fission. May act when the products of fission are directed toward mitochondrial homeostasis, mitophagy, or apoptosis. Can induce cytochrome c release from the mitochondrion to the cytosol, ultimately leading to apoptosis. This Rattus norvegicus (Rat) protein is Mitochondrial fission 1 protein.